The following is a 213-amino-acid chain: Peptidyl-tRNA hydrolase (213 aa).

Tyrosine 15 serves as a coordination point for tRNA. Histidine 20 serves as the catalytic Proton acceptor. Residues phenylalanine 66, asparagine 68, and asparagine 114 each coordinate tRNA. The segment at histidine 187–glutamine 213 is disordered. Residues alanine 201 to glutamine 213 are compositionally biased toward low complexity.

The protein belongs to the PTH family. As to quaternary structure, monomer.

Its subcellular location is the cytoplasm. It carries out the reaction an N-acyl-L-alpha-aminoacyl-tRNA + H2O = an N-acyl-L-amino acid + a tRNA + H(+). Hydrolyzes ribosome-free peptidyl-tRNAs (with 1 or more amino acids incorporated), which drop off the ribosome during protein synthesis, or as a result of ribosome stalling. Its function is as follows. Catalyzes the release of premature peptidyl moieties from peptidyl-tRNA molecules trapped in stalled 50S ribosomal subunits, and thus maintains levels of free tRNAs and 50S ribosomes. This chain is Peptidyl-tRNA hydrolase, found in Paracidovorax citrulli (strain AAC00-1) (Acidovorax citrulli).